A 353-amino-acid chain; its full sequence is Glycerol-3-phosphate dehydrogenase [NAD(+)], cytoplasmic (353 aa).

Residue Ala2 is modified to Blocked amino end (Ala). NAD(+)-binding positions include Gly11–Gly16, Phe98, Lys121, and Ala155. Lys121 contacts substrate. Lys206 serves as the catalytic Proton acceptor. Residues Arg270 and Gln299 each contribute to the NAD(+) site. Arg270–Asn271 is a binding site for substrate.

Belongs to the NAD-dependent glycerol-3-phosphate dehydrogenase family. Homodimer.

Its subcellular location is the cytoplasm. It catalyses the reaction sn-glycerol 3-phosphate + NAD(+) = dihydroxyacetone phosphate + NADH + H(+). Its pathway is phospholipid metabolism; alpha-glycerophosphate cycle. The sequence is that of Glycerol-3-phosphate dehydrogenase [NAD(+)], cytoplasmic from Drosophila virilis (Fruit fly).